The sequence spans 492 residues: N-succinylglutamate 5-semialdehyde dehydrogenase (492 aa).

220–225 (GSANTG) provides a ligand contact to NAD(+). Active-site residues include E243 and C277.

Belongs to the aldehyde dehydrogenase family. AstD subfamily.

It catalyses the reaction N-succinyl-L-glutamate 5-semialdehyde + NAD(+) + H2O = N-succinyl-L-glutamate + NADH + 2 H(+). It participates in amino-acid degradation; L-arginine degradation via AST pathway; L-glutamate and succinate from L-arginine: step 4/5. Its function is as follows. Catalyzes the NAD-dependent reduction of succinylglutamate semialdehyde into succinylglutamate. The sequence is that of N-succinylglutamate 5-semialdehyde dehydrogenase from Escherichia coli (strain SE11).